A 273-amino-acid chain; its full sequence is Putative phosphoenolpyruvate synthase regulatory protein (273 aa).

154–161 contacts ADP; sequence GVSRSGKT.

The protein belongs to the pyruvate, phosphate/water dikinase regulatory protein family. PSRP subfamily.

The enzyme catalyses [pyruvate, water dikinase] + ADP = [pyruvate, water dikinase]-phosphate + AMP + H(+). The catalysed reaction is [pyruvate, water dikinase]-phosphate + phosphate + H(+) = [pyruvate, water dikinase] + diphosphate. Functionally, bifunctional serine/threonine kinase and phosphorylase involved in the regulation of the phosphoenolpyruvate synthase (PEPS) by catalyzing its phosphorylation/dephosphorylation. The polypeptide is Putative phosphoenolpyruvate synthase regulatory protein (Neisseria meningitidis serogroup B (strain ATCC BAA-335 / MC58)).